The sequence spans 644 residues: Archaeal Lon protease (644 aa).

A compositionally biased stretch (polar residues) spans 1–18; that stretch reads MKTTIKNSRTQESVSYEG. The disordered stretch occupies residues 1–30; the sequence is MKTTIKNSRTQESVSYEGNETKKGTGETLS. Topologically, residues 1-137 are cytoplasmic; that stretch reads MKTTIKNSRT…KARSQDEKKN (137 aa). 71 to 78 is a binding site for ATP; it reads GEPGVGKS. 2 helical membrane passes run 138-155 and 156-171; these read LFMM…FMMN and QFLA…FLAL. Residues 172–644 are Cytoplasmic-facing; that stretch reads QQFRPRTTVM…PSIMKKPAMH (473 aa). The 180-residue stretch at 438–617 folds into the Lon proteolytic domain; sequence GGEVGRVNGL…GDVLEHALIG (180 aa). Catalysis depends on residues Ser524 and Lys567.

It belongs to the peptidase S16 family. Archaeal LonB subfamily. In terms of assembly, homohexamer. Organized in a ring with a central cavity.

It is found in the cell membrane. In terms of biological role, ATP-dependent serine protease that mediates the selective degradation of mutant and abnormal proteins as well as certain short-lived regulatory proteins. Degrades polypeptides processively. In Methanothermobacter thermautotrophicus (strain ATCC 29096 / DSM 1053 / JCM 10044 / NBRC 100330 / Delta H) (Methanobacterium thermoautotrophicum), this protein is Archaeal Lon protease.